Reading from the N-terminus, the 280-residue chain is UDP-3-O-acyl-N-acetylglucosamine deacetylase (280 aa).

Residues H77, H238, and D242 each contribute to the Zn(2+) site. The Proton donor role is filled by H265.

This sequence belongs to the LpxC family. It depends on Zn(2+) as a cofactor.

It carries out the reaction a UDP-3-O-[(3R)-3-hydroxyacyl]-N-acetyl-alpha-D-glucosamine + H2O = a UDP-3-O-[(3R)-3-hydroxyacyl]-alpha-D-glucosamine + acetate. The protein operates within glycolipid biosynthesis; lipid IV(A) biosynthesis; lipid IV(A) from (3R)-3-hydroxytetradecanoyl-[acyl-carrier-protein] and UDP-N-acetyl-alpha-D-glucosamine: step 2/6. In terms of biological role, catalyzes the hydrolysis of UDP-3-O-myristoyl-N-acetylglucosamine to form UDP-3-O-myristoylglucosamine and acetate, the committed step in lipid A biosynthesis. This is UDP-3-O-acyl-N-acetylglucosamine deacetylase from Trichormus variabilis (strain ATCC 29413 / PCC 7937) (Anabaena variabilis).